The following is a 217-amino-acid chain: Hypersensitivity response secretion protein HrcR (217 aa).

Helical transmembrane passes span 6–26, 52–72, 158–178, and 190–210; these read FASL…AMVV, MVLN…VGME, IGFL…NLLM, and VAIP…VLIH.

The protein belongs to the FliP/MopC/SpaP family.

Its subcellular location is the cell membrane. Functionally, involved in the secretion of PopA, a proteinaceous elicitor of the hypersensitivity response in plants. The chain is Hypersensitivity response secretion protein HrcR (hrcR) from Ralstonia nicotianae (strain ATCC BAA-1114 / GMI1000) (Ralstonia solanacearum).